A 520-amino-acid chain; its full sequence is MSLSILIAIALFIGVFTYYLWIWSFWMRKGIKGPRGLPFFGIINAFQSYEKPWILRLGDWTKEYGPMYGFTDGVEKTLVVSDPEFVHEVFVKQFDNFYARKQNPLQGDPDKDPRIHLVTSQGHRWKRLRTLASPTFSNKSLRKIFSTVEESVAEMMRHLEKGTAGGKTIDILEYYQEFTMDIIGKIAMGQSGSMMFENPWLDKIRAIFNTRGNIIFIICGIVPFTGSIFRWFFSKVPTAQTVTSLMHTLEIALTKRVEQRAADEKAGIESSGEPQDFIDLFLDVQADTDFLEDETKNGFARSQIVKVDKHLTFDEIIGQLFVFLLAGYDTTALSLSYSSYLLARHPEIQKKLQEEVDRECPDPEVTFDQLSKLKYMECVIKETLRLYPLASIVHNRKCMKSTTVLGMKIEEGTNVQADTWTLHYDPKFWGENANEFKPERWESGDEQAVAKGAYLPFGLGPRICIGMRLAYMEEKMLLAQILKKYSLETTFETHIPLKLVGIATTAPTNVHLKLKPRHSD.

C464 lines the heme pocket.

It belongs to the cytochrome P450 family. Requires heme as cofactor.

Its function is as follows. Cytochromes P450 are a group of heme-thiolate monooxygenases. They oxidize a variety of structurally unrelated compounds, including steroids, fatty acids, and xenobiotics. The sequence is that of Putative cytochrome P450 CYP13A3 (cyp-13A3) from Caenorhabditis elegans.